A 117-amino-acid chain; its full sequence is Putative phosphotransferase enzyme IIB component MG129 (117 aa).

A helical transmembrane segment spans residues 1–21 (MKWLLWLGYIFSFGLLYLWIV). The 76-residue stretch at 42-117 (PFKVKDFVSA…ELKKKIEDEQ (76 aa)) folds into the PTS EIIB type-1 domain.

The protein localises to the membrane. Functionally, the phosphoenolpyruvate-dependent sugar phosphotransferase system (PTS), a major carbohydrate active -transport system, catalyzes the phosphorylation of incoming sugar substrates concomitant with their translocation across the cell membrane. In Mycoplasma genitalium (strain ATCC 33530 / DSM 19775 / NCTC 10195 / G37) (Mycoplasmoides genitalium), this protein is Putative phosphotransferase enzyme IIB component MG129.